The chain runs to 267 residues: 22 kDa alpha-zein 14 (267 aa).

The first 21 residues, Met-1–Ala-21, serve as a signal peptide directing secretion.

The protein belongs to the zein family.

Its function is as follows. Zeins are major seed storage proteins. In Zea mays (Maize), this protein is 22 kDa alpha-zein 14.